The sequence spans 226 residues: Cytidylate kinase (226 aa).

10-18 (GPAGAGKST) is an ATP binding site.

Belongs to the cytidylate kinase family. Type 1 subfamily.

It is found in the cytoplasm. It carries out the reaction CMP + ATP = CDP + ADP. The catalysed reaction is dCMP + ATP = dCDP + ADP. This chain is Cytidylate kinase, found in Caldicellulosiruptor saccharolyticus (strain ATCC 43494 / DSM 8903 / Tp8T 6331).